The sequence spans 384 residues: 2-deoxy-scyllo-inosose synthase (384 aa).

NAD(+) is bound by residues Asp-42, Glu-73–Lys-76, Gly-105–Asn-109, Thr-129–Thr-130, Ser-140–Lys-142, and Lys-151–Asn-152. Residue Lys-142 is part of the active site. Residue Glu-184 participates in Co(2+) binding. The active site involves Glu-244. Residues His-247 and His-263 each coordinate Co(2+).

Belongs to the sugar phosphate cyclases superfamily. DOI synthase family. NAD(+) serves as cofactor. The cofactor is Co(2+).

The enzyme catalyses D-glucose 6-phosphate = 2-deoxy-L-scyllo-inosose + phosphate. It functions in the pathway metabolic intermediate biosynthesis; 2-deoxystreptamine biosynthesis; 2-deoxystreptamine from D-glucose 6-phosphate: step 1/4. Its pathway is antibiotic biosynthesis; lividomycin biosynthesis. Catalyzes the intramolecular carbocycle formation from D-glucose-6-phosphate to 2-deoxy-scyllo-inosose (DOI). In Streptomyces lividus, this protein is 2-deoxy-scyllo-inosose synthase (livC).